Consider the following 438-residue polypeptide: EF-hand calcium-binding domain-containing protein 3 (438 aa).

2 EF-hand domains span residues S47 to N82 and L83 to F118. Ca(2+)-binding residues include D96, D98, D100, K102, and D107. A Phosphotyrosine modification is found at Y279. A disordered region spans residues S413–Q438. The segment covering R426–Q438 has biased composition (basic residues).

The chain is EF-hand calcium-binding domain-containing protein 3 (EFCAB3) from Bos taurus (Bovine).